A 259-amino-acid polypeptide reads, in one-letter code: Putative aldolase class 2 protein PA3430 (259 aa).

Zn(2+) is bound by residues His-113, His-115, and His-176.

This sequence belongs to the aldolase class II family. The cofactor is Zn(2+).

The chain is Putative aldolase class 2 protein PA3430 from Pseudomonas aeruginosa (strain ATCC 15692 / DSM 22644 / CIP 104116 / JCM 14847 / LMG 12228 / 1C / PRS 101 / PAO1).